We begin with the raw amino-acid sequence, 403 residues long: Riboflavin biosynthesis protein RibBA (403 aa).

The tract at residues 1-204 (MKNKVFASIG…IGELVNYRRR (204 aa)) is DHBP synthase. Residues 30 to 31 (RE), Asp-35, 143 to 147 (RTGHT), and Glu-167 contribute to the D-ribulose 5-phosphate site. Glu-31 is a Mg(2+) binding site. His-146 contacts Mg(2+). The segment at 205 to 403 (TEKFISEIVN…EKMGHMLKKV (199 aa)) is GTP cyclohydrolase II. Residue 255–259 (RVHSS) participates in GTP binding. Residues Cys-260, Cys-271, and Cys-273 each contribute to the Zn(2+) site. GTP is bound by residues Gln-276, 298–300 (EGR), and Thr-320. Asp-332 functions as the Proton acceptor; for GTP cyclohydrolase activity in the catalytic mechanism. Catalysis depends on Arg-334, which acts as the Nucleophile; for GTP cyclohydrolase activity. The GTP site is built by Thr-355 and Lys-360.

This sequence in the N-terminal section; belongs to the DHBP synthase family. It in the C-terminal section; belongs to the GTP cyclohydrolase II family. It depends on Mg(2+) as a cofactor. Requires Mn(2+) as cofactor. Zn(2+) is required as a cofactor.

The catalysed reaction is D-ribulose 5-phosphate = (2S)-2-hydroxy-3-oxobutyl phosphate + formate + H(+). It catalyses the reaction GTP + 4 H2O = 2,5-diamino-6-hydroxy-4-(5-phosphoribosylamino)-pyrimidine + formate + 2 phosphate + 3 H(+). It participates in cofactor biosynthesis; riboflavin biosynthesis; 2-hydroxy-3-oxobutyl phosphate from D-ribulose 5-phosphate: step 1/1. It functions in the pathway cofactor biosynthesis; riboflavin biosynthesis; 5-amino-6-(D-ribitylamino)uracil from GTP: step 1/4. In terms of biological role, catalyzes the conversion of D-ribulose 5-phosphate to formate and 3,4-dihydroxy-2-butanone 4-phosphate. Functionally, catalyzes the conversion of GTP to 2,5-diamino-6-ribosylamino-4(3H)-pyrimidinone 5'-phosphate (DARP), formate and pyrophosphate. This is Riboflavin biosynthesis protein RibBA from Endomicrobium trichonymphae.